Reading from the N-terminus, the 129-residue chain is Large ribosomal subunit protein bL21 (129 aa).

The tract at residues 102-129 (TDNAKPTKGPRPKKEKVAKEATKEDAAA) is disordered. Residues 116 to 129 (EKVAKEATKEDAAA) are compositionally biased toward basic and acidic residues.

Belongs to the bacterial ribosomal protein bL21 family. As to quaternary structure, part of the 50S ribosomal subunit. Contacts protein L20.

Functionally, this protein binds to 23S rRNA in the presence of protein L20. In Bradyrhizobium diazoefficiens (strain JCM 10833 / BCRC 13528 / IAM 13628 / NBRC 14792 / USDA 110), this protein is Large ribosomal subunit protein bL21.